A 282-amino-acid polypeptide reads, in one-letter code: MMPFLLIDFPAFKPIAIEIGPFAIRWYALAYICGIVFGWLYARSLLKNERLWGGPAPISLVQVDDFILWVTLGIILGGRTGYVLFYNLPFFIEHPAAIFRLWEGGMSFHGGFLGCVVAVMWFAYRNGIPILSLGDITTAVAPVGLLLGRIANFINGELWGRATDASLPWAMVFPNDPTQLPRHPSQLYEAGMEGILLFTVLAIMIRLGALKRPGMILGAFILIYGLTRIAGEHFREPDVQLGFLWGGLTMGMLLSIPMLIVGLILIVLAIRRGAPRPIEAIR.

The next 3 membrane-spanning stretches (helical) occupy residues Ile19–Trp39, Ile58–Gly78, and Gly104–Tyr124. Arg149 provides a ligand contact to a 1,2-diacyl-sn-glycero-3-phospho-(1'-sn-glycerol). A run of 3 helical transmembrane segments spans residues Ala190 to Leu210, Gly214 to Phe234, and Met250 to Ile270.

The protein belongs to the Lgt family.

The protein resides in the cell inner membrane. It catalyses the reaction L-cysteinyl-[prolipoprotein] + a 1,2-diacyl-sn-glycero-3-phospho-(1'-sn-glycerol) = an S-1,2-diacyl-sn-glyceryl-L-cysteinyl-[prolipoprotein] + sn-glycerol 1-phosphate + H(+). Its pathway is protein modification; lipoprotein biosynthesis (diacylglyceryl transfer). Functionally, catalyzes the transfer of the diacylglyceryl group from phosphatidylglycerol to the sulfhydryl group of the N-terminal cysteine of a prolipoprotein, the first step in the formation of mature lipoproteins. This Bradyrhizobium diazoefficiens (strain JCM 10833 / BCRC 13528 / IAM 13628 / NBRC 14792 / USDA 110) protein is Phosphatidylglycerol--prolipoprotein diacylglyceryl transferase.